We begin with the raw amino-acid sequence, 402 residues long: Digeranylgeranylglycerophospholipid reductase (402 aa).

FAD is bound by residues Gly-15, Glu-34, Cys-45, Ala-46, Gly-48, Arg-99, Ala-123, Asp-280, Gly-292, and Ile-293.

Belongs to the geranylgeranyl reductase family. DGGGPL reductase subfamily. Requires FAD as cofactor.

The enzyme catalyses a 2,3-bis-O-phytanyl-sn-glycerol 1-phospholipid + 8 oxidized 2[4Fe-4S]-[ferredoxin] = a 2,3-bis-O-(geranylgeranyl)-sn-glycerol 1-phospholipid + 8 reduced 2[4Fe-4S]-[ferredoxin] + 16 H(+). It catalyses the reaction 2,3-bis-O-(phytanyl)-sn-glycerol 1-phosphate + 8 oxidized 2[4Fe-4S]-[ferredoxin] = 2,3-bis-O-(geranylgeranyl)-sn-glycerol 1-phosphate + 8 reduced 2[4Fe-4S]-[ferredoxin] + 16 H(+). The catalysed reaction is a 2,3-bis-O-phytanyl-sn-glycerol 1-phospholipid + 8 A = a 2,3-bis-O-(geranylgeranyl)-sn-glycerol 1-phospholipid + 8 AH2. It carries out the reaction CDP-2,3-bis-O-(geranylgeranyl)-sn-glycerol + 8 AH2 = CDP-2,3-bis-O-(phytanyl)-sn-glycerol + 8 A. The enzyme catalyses archaetidylserine + 8 AH2 = 2,3-bis-O-phytanyl-sn-glycero-3-phospho-L-serine + 8 A. Its pathway is membrane lipid metabolism; glycerophospholipid metabolism. Functionally, is involved in the reduction of 2,3-digeranylgeranylglycerophospholipids (unsaturated archaeols) into 2,3-diphytanylglycerophospholipids (saturated archaeols) in the biosynthesis of archaeal membrane lipids. Catalyzes the formation of archaetidic acid (2,3-di-O-phytanyl-sn-glyceryl phosphate) from 2,3-di-O-geranylgeranylglyceryl phosphate (DGGGP) via the hydrogenation of each double bond of the isoprenoid chains. Is also probably able to reduce double bonds of geranyl groups in CDP-2,3-bis-O-(geranylgeranyl)-sn-glycerol and archaetidylserine, thus acting at various stages in the biosynthesis of archaeal membrane lipids. The polypeptide is Digeranylgeranylglycerophospholipid reductase (Methanospirillum hungatei JF-1 (strain ATCC 27890 / DSM 864 / NBRC 100397 / JF-1)).